We begin with the raw amino-acid sequence, 437 residues long: Vacuolar cation/proton exchanger 2 (437 aa).

The interval 1 to 29 (MMGAEKAEGMEELELEEGGGSPSPSPMTA) is disordered. The Cytoplasmic portion of the chain corresponds to 1-65 (MMGAEKAEGM…KWRRALTSVR (65 aa)). The helical transmembrane segment at 66 to 86 (VVILQAKINVLLPFGPLAVML) threads the bilayer. Topologically, residues 87 to 88 (HY) are extracellular. A helical membrane pass occupies residues 89-109 (LSANHQGWVFLFSLIGITPLA). Residues 110–126 (ERLGYATEQLALYTGPT) are Cytoplasmic-facing. A helical membrane pass occupies residues 127-147 (IGGLLNATFGNATEMIISLYA). The interval 136 to 171 (GNATEMIISLYALKNGMIRVVQQSLLGSILSNMLLV) is cation selection. At 148-161 (LKNGMIRVVQQSLL) the chain is on the extracellular side. Residues 162-182 (GSILSNMLLVLGCAFFAGGLV) form a helical membrane-spanning segment. Residues 183 to 194 (HPSRDQVFNKAS) lie on the Cytoplasmic side of the membrane. A helical transmembrane segment spans residues 195–215 (AVVNSGLLLMAVLGLMFPAVL). Residues 216-228 (HFTHSEVQYGKSE) lie on the Extracellular side of the membrane. The chain crosses the membrane as a helical span at residues 229–249 (VSLSRFSSCIMLVAYASYLFF). Over 250-281 (QLKSQRSLYSPIGEQEEEVTEDEEEEKEITQG) the chain is Cytoplasmic. A helical membrane pass occupies residues 282 to 302 (EAICWLFVLTIWISILSGYLV). The Extracellular segment spans residues 303-310 (DAIQGASE). Residues 311–331 (SLNMPVAFISVILLPIVGNAA) traverse the membrane as a helical segment. The cation selection stretch occupies residues 328–363 (GNAAEHASAIMFAMKDKLDITLGVAIGSSTQISMFV). Residues 332 to 352 (EHASAIMFAMKDKLDITLGVA) are Cytoplasmic-facing. The helical transmembrane segment at 353-373 (IGSSTQISMFVIPFCVVIGWI) threads the bilayer. The Extracellular portion of the chain corresponds to 374–379 (MGQQMD). A helical membrane pass occupies residues 380-400 (LNFQLFETATLFITVLVVAFM). Over 401–408 (LQEGTSNY) the chain is Cytoplasmic. Residues 409–429 (FKGLMLILCYLIVAASFFVHV) traverse the membrane as a helical segment. The Extracellular segment spans residues 430–437 (DPDSSNNK).

This sequence belongs to the Ca(2+):cation antiporter (CaCA) (TC 2.A.19) family. Cation/proton exchanger (CAX) subfamily. As to expression, expressed in roots and shoots.

The protein resides in the vacuole membrane. In terms of biological role, vacuolar cation/proton exchanger (CAX). Translocates Ca(2+) and other metal ions into vacuoles using the proton gradient formed by H(+)-ATPase and H(+)-pyrophosphatase. The polypeptide is Vacuolar cation/proton exchanger 2 (CAX2) (Oryza sativa subsp. japonica (Rice)).